Here is a 279-residue protein sequence, read N- to C-terminus: Energy-coupling factor transporter ATP-binding protein EcfA1 (279 aa).

Residues Val6–Gly240 form the ABC transporter domain. Gly40–Ser47 provides a ligand contact to ATP.

The protein belongs to the ABC transporter superfamily. Energy-coupling factor EcfA family. In terms of assembly, forms a stable energy-coupling factor (ECF) transporter complex composed of 2 membrane-embedded substrate-binding proteins (S component), 2 ATP-binding proteins (A component) and 2 transmembrane proteins (T component).

The protein resides in the cell membrane. In terms of biological role, ATP-binding (A) component of a common energy-coupling factor (ECF) ABC-transporter complex. Unlike classic ABC transporters this ECF transporter provides the energy necessary to transport a number of different substrates. The sequence is that of Energy-coupling factor transporter ATP-binding protein EcfA1 from Listeria monocytogenes serovar 1/2a (strain ATCC BAA-679 / EGD-e).